Here is an 89-residue protein sequence, read N- to C-terminus: Small ribosomal subunit protein uS14 (89 aa).

The protein belongs to the universal ribosomal protein uS14 family. As to quaternary structure, part of the 30S ribosomal subunit. Contacts proteins S3 and S10.

In terms of biological role, binds 16S rRNA, required for the assembly of 30S particles and may also be responsible for determining the conformation of the 16S rRNA at the A site. The protein is Small ribosomal subunit protein uS14 of Leuconostoc citreum (strain KM20).